A 305-amino-acid chain; its full sequence is UDP-N-acetylenolpyruvoylglucosamine reductase (305 aa).

The region spanning 33–198 (RVGGPAQVLF…TGGTFRGRRA (166 aa)) is the FAD-binding PCMH-type domain. R178 is an active-site residue. The active-site Proton donor is the S227. Residue E297 is part of the active site.

This sequence belongs to the MurB family. Requires FAD as cofactor.

It is found in the cytoplasm. It carries out the reaction UDP-N-acetyl-alpha-D-muramate + NADP(+) = UDP-N-acetyl-3-O-(1-carboxyvinyl)-alpha-D-glucosamine + NADPH + H(+). The protein operates within cell wall biogenesis; peptidoglycan biosynthesis. Its function is as follows. Cell wall formation. The protein is UDP-N-acetylenolpyruvoylglucosamine reductase of Nitrobacter hamburgensis (strain DSM 10229 / NCIMB 13809 / X14).